Reading from the N-terminus, the 135-residue chain is Glutaredoxin-C4 (135 aa).

In terms of domain architecture, Glutaredoxin spans 32-132; that stretch reads ADFVKKTISS…KLLGVSGNKE (101 aa). The cysteines at positions 52 and 55 are disulfide-linked.

It belongs to the glutaredoxin family. CPYC subfamily.

The protein resides in the cytoplasm. Has a glutathione-disulfide oxidoreductase activity in the presence of NADPH and glutathione reductase. Reduces low molecular weight disulfides and proteins. This is Glutaredoxin-C4 (GRXC4) from Arabidopsis thaliana (Mouse-ear cress).